The primary structure comprises 298 residues: ATP phosphoribosyltransferase (298 aa).

Belongs to the ATP phosphoribosyltransferase family. Long subfamily. The cofactor is Mg(2+).

The protein localises to the cytoplasm. It carries out the reaction 1-(5-phospho-beta-D-ribosyl)-ATP + diphosphate = 5-phospho-alpha-D-ribose 1-diphosphate + ATP. It participates in amino-acid biosynthesis; L-histidine biosynthesis; L-histidine from 5-phospho-alpha-D-ribose 1-diphosphate: step 1/9. With respect to regulation, feedback inhibited by histidine. Its function is as follows. Catalyzes the condensation of ATP and 5-phosphoribose 1-diphosphate to form N'-(5'-phosphoribosyl)-ATP (PR-ATP). Has a crucial role in the pathway because the rate of histidine biosynthesis seems to be controlled primarily by regulation of HisG enzymatic activity. The protein is ATP phosphoribosyltransferase of Psychromonas ingrahamii (strain DSM 17664 / CCUG 51855 / 37).